A 55-amino-acid chain; its full sequence is Large ribosomal subunit protein bL33 (55 aa).

This sequence belongs to the bacterial ribosomal protein bL33 family.

This chain is Large ribosomal subunit protein bL33, found in Buchnera aphidicola subsp. Acyrthosiphon pisum (strain 5A).